Consider the following 341-residue polypeptide: Processive diacylglycerol beta-glycosyltransferase (341 aa).

This sequence belongs to the glycosyltransferase 2 family. Mg(2+) is required as a cofactor.

The protein resides in the cell membrane. The enzyme catalyses a 1,2-diacyl-sn-glycerol + UDP-alpha-D-glucose = a 1,2-diacyl-3-O-(beta-D-glucopyranosyl)-sn-glycerol + UDP + H(+). The catalysed reaction is a 1,2-diacyl-sn-glycerol + UDP-alpha-D-galactose = a 1,2-diacyl-3-O-(beta-D-galactosyl)-sn-glycerol + UDP + H(+). It catalyses the reaction a 1,2-diacyl-3-O-(beta-D-galactosyl)-sn-glycerol + UDP-alpha-D-glucose = a 1,2-diacyl-3-O-[beta-D-glucopyranosyl-(1-&gt;6)-beta-D-galactopyranosyl]-sn-glycerol + UDP + H(+). It carries out the reaction a 1,2-diacyl-3-O-(beta-D-galactosyl)-sn-glycerol + UDP-alpha-D-galactose = a 1,2-diacyl-3-O-[beta-D-galactosyl-(1-&gt;6)-beta-D-galactosyl]-sn-glycerol + UDP + H(+). With respect to regulation, activated by the negatively charged lipid phosphatidylglycerol (PG). In terms of biological role, processive glycosyltransferase involved in the biosynthesis of both the non-bilayer-prone beta-monoglycosyldiacylglycerol and the bilayer-forming membrane lipid glucosyl-galactosyldiacylglycerol and digalactosyl-diacylglycerol. These components contribute to regulate the properties and stability of the membrane. Catalyzes sequentially the transfers of glucosyl or galactosyl residues from UDP-Glc or UDP-Gal to diacylglycerol (DAG) acceptor to form the corresponding beta-glycosyl-DAG (3-O-(beta-D-glycopyranosyl)-1,2-diacyl-sn-glycerol). Then, only beta-galactosyl-DAG (3-O-(beta-D-galactopyranosyl)-1,2-diacyl-sn-glycerol) can act as acceptor to give the beta-glycosyl-beta-galactosyl-DAG product (3-O-(beta-D-glycopyranosyl-(1-&gt;6)-D-galactopyranosyl)-1,2-diacyl-sn-glycerol). It can also use alpha-Gal-beta-Gal-DAG, ceramide (Cer) and beta-Gal-Cer as sugar acceptors. The enzyme is supposed to be mainly a galactosyltransferase, with higher glycosyltransferase activity for the addition of the second glycosyl on beta-Gal-DAG as acceptor. The main glycolipid produced in vivo is beta-Glc-beta-Gal-DAG with a beta-1,6 linkage. The sequence is that of Processive diacylglycerol beta-glycosyltransferase from Mycoplasma pneumoniae (strain ATCC 29342 / M129 / Subtype 1) (Mycoplasmoides pneumoniae).